We begin with the raw amino-acid sequence, 62 residues long: Calmodulin regulator protein PCP4 (62 aa).

The tract at residues Met1 to Thr39 is disordered. A compositionally biased stretch (basic and acidic residues) spans Gly12–Glu28. Residues Glu28–Glu40 are acidic; binds calcium and is required for modulating the calcium-binding kinetics of calmodulin. Positions Thr39–Ser62 constitute an IQ domain.

The protein belongs to the PCP4 family. As to quaternary structure, binds to both calcium-free and calcium-bound calmodulin. The affinity for the calcium-bound form is 50-fold greater.

In terms of biological role, functions as a modulator of calcium-binding by calmodulin. Thereby, regulates calmodulin activity and the different processes it controls. For instance, may play a role in neuronal differentiation through activation of calmodulin-dependent kinase signaling pathways. The sequence is that of Calmodulin regulator protein PCP4 from Homo sapiens (Human).